The chain runs to 449 residues: Exodeoxyribonuclease 7 large subunit (449 aa).

Belongs to the XseA family. Heterooligomer composed of large and small subunits.

It is found in the cytoplasm. The enzyme catalyses Exonucleolytic cleavage in either 5'- to 3'- or 3'- to 5'-direction to yield nucleoside 5'-phosphates.. Functionally, bidirectionally degrades single-stranded DNA into large acid-insoluble oligonucleotides, which are then degraded further into small acid-soluble oligonucleotides. This is Exodeoxyribonuclease 7 large subunit from Salmonella typhi.